The chain runs to 326 residues: Protease inhibitor (326 aa).

The first 24 residues, Met1 to Ala24, serve as a signal peptide directing secretion. 2 tandem repeats follow at residues Ile177 to Ala208 and Val272 to Ala304. The interval Ile177–Ala304 is 2 X 32 AA approximate repeats.

Proteolytically cleaved to yield at least three forms (BBRPI-A, -B, and -C).

The protein localises to the secreted. Its function is as follows. Shows inhibitory activity towards serine proteases, such as trypsin, chymotrypsin and subtilisin. May form a trypsin-inhibitor complex in a molar ratio of 1:1. The chain is Protease inhibitor from Brevibacillus choshinensis.